Consider the following 475-residue polypeptide: Eukaryotic translation initiation factor 3 subunit L (475 aa).

Positions 257 to 451 (DAIRMFSHIL…DLDYAMQGDL (195 aa)) constitute a PCI domain.

The protein belongs to the eIF-3 subunit L family. In terms of assembly, component of the eukaryotic translation initiation factor 3 (eIF-3) complex.

It is found in the cytoplasm. Its function is as follows. Component of the eukaryotic translation initiation factor 3 (eIF-3) complex, which is involved in protein synthesis of a specialized repertoire of mRNAs and, together with other initiation factors, stimulates binding of mRNA and methionyl-tRNAi to the 40S ribosome. The eIF-3 complex specifically targets and initiates translation of a subset of mRNAs involved in cell proliferation. The protein is Eukaryotic translation initiation factor 3 subunit L of Sclerotinia sclerotiorum (strain ATCC 18683 / 1980 / Ss-1) (White mold).